The chain runs to 622 residues: Cilia- and flagella-associated protein 206 (622 aa).

Belongs to the CFAP206 family.

It localises to the cytoplasm. The protein localises to the cytoskeleton. The protein resides in the cilium axoneme. Its subcellular location is the cilium basal body. Essential for sperm motility and is involved in the regulation of the beating frequency of motile cilia on the epithelial cells of the respiratory tract. Required for the establishment of radial spokes in sperm flagella. This is Cilia- and flagella-associated protein 206 from Rattus norvegicus (Rat).